The sequence spans 419 residues: MLGFFGPLYEQLVGMLRKQQGQLAFDTIDRVNAWFTPFVLVAMTLAISCKQYFGQPIKCWTPREFSGSWDGYVHDFCFIENTYFVPNGTEVTDEARGGRHINYYRWVPLVLLFQAAMFVLPYHLWNLFHKRTTINLKGSLRFFEGALKKLEPAQACESFAGEIWNRLSDIRNSSNKLYGFQATINYFLLKLGFIVNCILQMVLLKHFLDVDDYFWGFFHLWNVEFKGTAEKEDSIFPRIVLCDFKVRNLGQQHQHTVSCIMILNMIIEKLYICFYFWLIFVFVVTTAGMIHFAFQILFRRHSLIPTNLNNKNKMNPTRSHEFIKDYLNFDGCLLLTYVDAQFGAFRTSQVIDGLVHRFTNELDSDSSAVTSLNEDHPERYVAFNTDTIPMDRYARKHHSLIEEVDGPSAPPANEEKKEI.

4 helical membrane-spanning segments follow: residues 33 to 53 (AWFTPFVLVAMTLAISCKQYF), 108 to 128 (PLVLLFQAAMFVLPYHLWNLF), 184 to 204 (INYFLLKLGFIVNCILQMVLL), and 270 to 290 (LYICFYFWLIFVFVVTTAGMI).

The protein belongs to the pannexin family.

It is found in the cell membrane. The protein resides in the cell junction. Its subcellular location is the gap junction. Structural component of the gap junctions. This is Innexin-2 (inx-2) from Caenorhabditis elegans.